Reading from the N-terminus, the 352-residue chain is Zinc finger CCCH domain-containing protein 42 (352 aa).

Residues 36–114 (AYVYVGGIPF…RTIKVDHCGA (79 aa)) enclose the RRM domain. 2 consecutive C3H1-type zinc fingers follow at residues 130–157 (REAR…HDEK) and 180–207 (REGR…HDEK). Residues 156–179 (EKRAANTGWGHEEDRSSKWDHDKN) are disordered. 3 stretches are compositionally biased toward basic and acidic residues: residues 210-230 (ATTG…DKLN), 243-296 (GDFK…RSGR), and 304-352 (RHND…DRRR). The tract at residues 210–352 (ATTGWGHEED…DSLRREDRRR (143 aa)) is disordered. A coiled-coil region spans residues 319-348 (RAQDWEKRKAESRRDRNDREEKDRDSLRRE).

The chain is Zinc finger CCCH domain-containing protein 42 from Arabidopsis thaliana (Mouse-ear cress).